The chain runs to 79 residues: Orally active insecticidal peptide (79 aa).

The N-terminal stretch at 1–19 (MRVLFIIAGLALLSVVCYT) is a signal peptide. Positions 20–44 (SEMKERSSFNEVLSEFFAADEPQER) are excised as a propeptide. 3 cysteine pairs are disulfide-bonded: C46–C61, C53–C66, and C60–C73. A77 bears the Alanine amide mark.

This sequence belongs to the neurotoxin 03 (Tx2) family. 01 subfamily. Expressed by the venom gland.

The protein resides in the secreted. In terms of biological role, probable ion channel inhibitor. Shows insecticidal activity when injected into mealworms. This is Orally active insecticidal peptide from Selenotypus plumipes (Australian featherleg tarantula).